We begin with the raw amino-acid sequence, 202 residues long: ATP-dependent Clp protease proteolytic subunit (202 aa).

S106 functions as the Nucleophile in the catalytic mechanism. The active site involves H131.

Belongs to the peptidase S14 family. As to quaternary structure, fourteen ClpP subunits assemble into 2 heptameric rings which stack back to back to give a disk-like structure with a central cavity, resembling the structure of eukaryotic proteasomes.

The protein localises to the cytoplasm. The catalysed reaction is Hydrolysis of proteins to small peptides in the presence of ATP and magnesium. alpha-casein is the usual test substrate. In the absence of ATP, only oligopeptides shorter than five residues are hydrolyzed (such as succinyl-Leu-Tyr-|-NHMec, and Leu-Tyr-Leu-|-Tyr-Trp, in which cleavage of the -Tyr-|-Leu- and -Tyr-|-Trp bonds also occurs).. Functionally, cleaves peptides in various proteins in a process that requires ATP hydrolysis. Has a chymotrypsin-like activity. Plays a major role in the degradation of misfolded proteins. The protein is ATP-dependent Clp protease proteolytic subunit of Variovorax paradoxus (strain S110).